A 415-amino-acid chain; its full sequence is MPELLNKTKTNLNFENIKILIKKFQSPFWVYDSNIIHKKINLLKEFDIVRFAQKACSNIHILRLMKQKNIKVDAVSLGEIERALVAGFKPNSNEIIFTADLFDEETLSKVIDFKIPVNAGSIDMLEQLGKLSPGHHVWLRINPGFGHGHSKKTNTGGENSKHGIWNPRLAIPIIKKYKLKLIGLHMHIGSGVNYKHLKKVGQAMIEKAMEINEKILFISAGGGLPIPYTFNEKPIDTKKYFIIWDEARKKISRFLNTPIQLEIEPGRFLVAESGILISQVRAIKKMGDKNFVLIDAGFNDLMRPTMYGSYHHVSVVTKDDRNIHETETIDTIIGGPLCESGDIFTQKEGGNITTRKLPILKIGDYLIFHDVGAYGASMSSNYNTRPLIQEILLENNTFRTIRRRQKINELLNLEK.

The residue at position 54 (K54) is an N6-(pyridoxal phosphate)lysine. Pyridoxal 5'-phosphate contacts are provided by residues G223 and 264–267 (EPGR). The substrate site is built by R267, R303, and Y307. Residue C338 is the Proton donor of the active site. Residues E339 and Y374 each coordinate substrate. Position 374 (Y374) interacts with pyridoxal 5'-phosphate.

Belongs to the Orn/Lys/Arg decarboxylase class-II family. LysA subfamily. As to quaternary structure, homodimer. The cofactor is pyridoxal 5'-phosphate.

The catalysed reaction is meso-2,6-diaminopimelate + H(+) = L-lysine + CO2. Its pathway is amino-acid biosynthesis; L-lysine biosynthesis via DAP pathway; L-lysine from DL-2,6-diaminopimelate: step 1/1. Specifically catalyzes the decarboxylation of meso-diaminopimelate (meso-DAP) to L-lysine. This chain is Diaminopimelate decarboxylase, found in Buchnera aphidicola subsp. Schizaphis graminum (strain Sg).